The following is a 306-amino-acid chain: Glutathione transport system permease protein GsiC (306 aa).

Residues 1–8 are Cytoplasmic-facing; that stretch reads MLNYVIKR. The chain crosses the membrane as a helical span at residues 9 to 29; sequence LLGLIPTLFIVSVLVFLFVHM. Residues 30-102 lie on the Periplasmic side of the membrane; it reads LPGDPARLIA…SRFMPTLWLT (73 aa). One can recognise an ABC transmembrane type-1 domain in the interval 95–292; that stretch reads FMPTLWLTIT…LEFILINLVV (198 aa). Residues 103–123 traverse the membrane as a helical segment; it reads ITSMVWAVIFGMAAGIIAAVW. Residues 124–134 lie on the Cytoplasmic side of the membrane; it reads RNRWPDRLSMT. A helical transmembrane segment spans residues 135-155; it reads IAVSGISFPAFALGMLLIQVF. Residues 156–168 are Periplasmic-facing; that stretch reads SVELGWLPTVGAD. Residues 169–189 traverse the membrane as a helical segment; it reads SWQHYILSSLTLGAAVAAVMA. Topologically, residues 190-228 are cytoplasmic; sequence RFTRASFVDVLSEDYMRTARAKGVSETWVVLKHGLRNAM. The helical transmembrane segment at 229 to 249 threads the bilayer; the sequence is IPVVTMMGLQFGFLLGGSIVV. The Periplasmic portion of the chain corresponds to 250–277; the sequence is EKVFNWPGLGRLLVDSVEMRDYPVIQAE. The chain crosses the membrane as a helical span at residues 278–298; it reads ILLFSLEFILINLVVDVLYAA. Topologically, residues 299 to 306 are cytoplasmic; that stretch reads INPAIRYK.

Belongs to the binding-protein-dependent transport system permease family. In terms of assembly, the complex is composed of two ATP-binding proteins (GsiA), two transmembrane proteins (GsiC and GsiD) and a solute-binding protein (GsiB).

It localises to the cell inner membrane. In terms of biological role, part of the ABC transporter complex GsiABCD involved in glutathione import. Probably responsible for the translocation of the substrate across the membrane. In Shigella boydii serotype 4 (strain Sb227), this protein is Glutathione transport system permease protein GsiC.